We begin with the raw amino-acid sequence, 166 residues long: 2-C-methyl-D-erythritol 2,4-cyclodiphosphate synthase (166 aa).

2 residues coordinate a divalent metal cation: aspartate 12 and histidine 14. 4-CDP-2-C-methyl-D-erythritol 2-phosphate contacts are provided by residues 12 to 14 (DVH) and 38 to 39 (HS). Histidine 46 serves as a coordination point for a divalent metal cation. 4-CDP-2-C-methyl-D-erythritol 2-phosphate is bound by residues 60-62 (DIG), 136-139 (TTSE), phenylalanine 143, and arginine 146.

It belongs to the IspF family. As to quaternary structure, homotrimer. Requires a divalent metal cation as cofactor.

It carries out the reaction 4-CDP-2-C-methyl-D-erythritol 2-phosphate = 2-C-methyl-D-erythritol 2,4-cyclic diphosphate + CMP. It functions in the pathway isoprenoid biosynthesis; isopentenyl diphosphate biosynthesis via DXP pathway; isopentenyl diphosphate from 1-deoxy-D-xylulose 5-phosphate: step 4/6. Functionally, involved in the biosynthesis of isopentenyl diphosphate (IPP) and dimethylallyl diphosphate (DMAPP), two major building blocks of isoprenoid compounds. Catalyzes the conversion of 4-diphosphocytidyl-2-C-methyl-D-erythritol 2-phosphate (CDP-ME2P) to 2-C-methyl-D-erythritol 2,4-cyclodiphosphate (ME-CPP) with a corresponding release of cytidine 5-monophosphate (CMP). The chain is 2-C-methyl-D-erythritol 2,4-cyclodiphosphate synthase from Xanthomonas axonopodis pv. citri (strain 306).